The primary structure comprises 224 residues: Orotate phosphoribosyltransferase (224 aa).

Lys29 contacts 5-phospho-alpha-D-ribose 1-diphosphate. An orotate-binding site is contributed by 37–38 (FF). Residues 75–76 (YK), Arg105, Lys106, Lys109, His111, and 130–138 (DDVITAGTS) each bind 5-phospho-alpha-D-ribose 1-diphosphate. Orotate is bound by residues Thr134 and Arg162.

Belongs to the purine/pyrimidine phosphoribosyltransferase family. PyrE subfamily. As to quaternary structure, homodimer. Mg(2+) serves as cofactor.

It carries out the reaction orotidine 5'-phosphate + diphosphate = orotate + 5-phospho-alpha-D-ribose 1-diphosphate. It functions in the pathway pyrimidine metabolism; UMP biosynthesis via de novo pathway; UMP from orotate: step 1/2. Functionally, catalyzes the transfer of a ribosyl phosphate group from 5-phosphoribose 1-diphosphate to orotate, leading to the formation of orotidine monophosphate (OMP). This is Orotate phosphoribosyltransferase from Bordetella parapertussis (strain 12822 / ATCC BAA-587 / NCTC 13253).